A 768-amino-acid polypeptide reads, in one-letter code: Ral guanine nucleotide dissociation stimulator-like 1 (768 aa).

Residues lysine 65–glutamine 196 enclose the N-terminal Ras-GEF domain. The Ras-GEF domain maps to serine 232–alanine 501. Serine 520 is subject to Phosphoserine. Positions methionine 528 to isoleucine 623 are disordered. 3 stretches are compositionally biased toward low complexity: residues serine 541 to serine 561, glutamate 586 to serine 596, and serine 605 to proline 621. In terms of domain architecture, Ras-associating spans aspartate 648 to serine 735.

Interacts with Ras. Expressed in a wide variety of tissues with strong expression being seen in the heart, brain, kidney, spleen and testis.

Functionally, probable guanine nucleotide exchange factor. The chain is Ral guanine nucleotide dissociation stimulator-like 1 (RGL1) from Homo sapiens (Human).